A 235-amino-acid polypeptide reads, in one-letter code: Putative N-acetylmannosamine-6-phosphate 2-epimerase (235 aa).

The protein belongs to the NanE family.

It catalyses the reaction an N-acyl-D-glucosamine 6-phosphate = an N-acyl-D-mannosamine 6-phosphate. It functions in the pathway amino-sugar metabolism; N-acetylneuraminate degradation; D-fructose 6-phosphate from N-acetylneuraminate: step 3/5. Its function is as follows. Converts N-acetylmannosamine-6-phosphate (ManNAc-6-P) to N-acetylglucosamine-6-phosphate (GlcNAc-6-P). The polypeptide is Putative N-acetylmannosamine-6-phosphate 2-epimerase (Photobacterium profundum (strain SS9)).